An 82-amino-acid chain; its full sequence is DNA-directed RNA polymerase subunit omega (82 aa).

It belongs to the RNA polymerase subunit omega family. In terms of assembly, in cyanobacteria the RNAP catalytic core is composed of 2 alpha, 1 beta, 1 beta', 1 gamma and 1 omega subunit. When a sigma factor is associated with the core the holoenzyme is formed, which can initiate transcription.

The enzyme catalyses RNA(n) + a ribonucleoside 5'-triphosphate = RNA(n+1) + diphosphate. Functionally, promotes RNA polymerase assembly. Latches the N- and C-terminal regions of the beta' subunit thereby facilitating its interaction with the beta and alpha subunits. This chain is DNA-directed RNA polymerase subunit omega, found in Trichodesmium erythraeum (strain IMS101).